Consider the following 603-residue polypeptide: Elongation factor 4 (603 aa).

The tr-type G domain maps to 2–184; it reads NHIRNFSIIA…AVVALIPAPK (183 aa). GTP-binding positions include 14–19 and 131–134; these read DHGKST and NKMD.

The protein belongs to the TRAFAC class translation factor GTPase superfamily. Classic translation factor GTPase family. LepA subfamily.

The protein resides in the cell inner membrane. The catalysed reaction is GTP + H2O = GDP + phosphate + H(+). In terms of biological role, required for accurate and efficient protein synthesis under certain stress conditions. May act as a fidelity factor of the translation reaction, by catalyzing a one-codon backward translocation of tRNAs on improperly translocated ribosomes. Back-translocation proceeds from a post-translocation (POST) complex to a pre-translocation (PRE) complex, thus giving elongation factor G a second chance to translocate the tRNAs correctly. Binds to ribosomes in a GTP-dependent manner. This chain is Elongation factor 4, found in Polaromonas naphthalenivorans (strain CJ2).